Reading from the N-terminus, the 873-residue chain is Protein translocase subunit SecA (873 aa).

ATP contacts are provided by residues Gln85, 103–107 (GEGKT), and Asp492. Residues 835-856 (RYAEEEGKQPIRKENQIGRNDD) are compositionally biased toward basic and acidic residues. Positions 835–873 (RYAEEEGKQPIRKENQIGRNDDCPCGSGKKYKKCCGKNA) are disordered. 4 residues coordinate Zn(2+): Cys857, Cys859, Cys868, and Cys869. Residues 863-873 (KKYKKCCGKNA) are compositionally biased toward basic residues.

The protein belongs to the SecA family. As to quaternary structure, monomer and homodimer. Part of the essential Sec protein translocation apparatus which comprises SecA, SecYEG and auxiliary proteins SecDF. Other proteins may also be involved. Zn(2+) is required as a cofactor.

The protein localises to the cell membrane. Its subcellular location is the cytoplasm. The enzyme catalyses ATP + H2O + cellular proteinSide 1 = ADP + phosphate + cellular proteinSide 2.. Functionally, part of the Sec protein translocase complex. Interacts with the SecYEG preprotein conducting channel. Has a central role in coupling the hydrolysis of ATP to the transfer of proteins into and across the cell membrane, serving as an ATP-driven molecular motor driving the stepwise translocation of polypeptide chains across the membrane. This chain is Protein translocase subunit SecA, found in Desulforamulus reducens (strain ATCC BAA-1160 / DSM 100696 / MI-1) (Desulfotomaculum reducens).